The following is a 354-amino-acid chain: Uroporphyrinogen decarboxylase (354 aa).

Residues 27-31 (RQAGR), Asp-77, Tyr-154, Ser-209, and His-327 contribute to the substrate site.

Belongs to the uroporphyrinogen decarboxylase family. In terms of assembly, homodimer.

It localises to the cytoplasm. The catalysed reaction is uroporphyrinogen III + 4 H(+) = coproporphyrinogen III + 4 CO2. It functions in the pathway porphyrin-containing compound metabolism; protoporphyrin-IX biosynthesis; coproporphyrinogen-III from 5-aminolevulinate: step 4/4. Functionally, catalyzes the decarboxylation of four acetate groups of uroporphyrinogen-III to yield coproporphyrinogen-III. This chain is Uroporphyrinogen decarboxylase, found in Shewanella halifaxensis (strain HAW-EB4).